A 94-amino-acid polypeptide reads, in one-letter code: Integration host factor subunit beta (94 aa).

Belongs to the bacterial histone-like protein family. Heterodimer of an alpha and a beta chain.

Functionally, this protein is one of the two subunits of integration host factor, a specific DNA-binding protein that functions in genetic recombination as well as in transcriptional and translational control. This is Integration host factor subunit beta from Mannheimia succiniciproducens (strain KCTC 0769BP / MBEL55E).